A 435-amino-acid polypeptide reads, in one-letter code: Cyclin-J-like protein (435 aa).

The Cyclin N-terminal domain occupies 14–191; it reads DVHCTLREKE…LLEAFSWNLC (178 aa). A disordered region spans residues 120 to 142; the sequence is SSNSPASAPHPPPTPPQVAETTG.

The protein belongs to the cyclin family. Cyclin J subfamily.

This chain is Cyclin-J-like protein (CCNJL), found in Homo sapiens (Human).